Consider the following 350-residue polypeptide: MNILADALLPGLDSAFPPPFTVTLYHKADEIPELLHYKDVLLCRSTLKINGDLLKNHQIKFVATATSGTDHIDFPFLESQNISIIDAKGCNAISVADYVVACLAYLDKQQLIQGKTAGIIGLGQVGTKVYERLNAAEFQLCLYDPPKATRDTSFQSCSLEDLFECDLLCVHAELHSDAPYPSLNLINRDFLKELKPGCIIINASRGGIVNEEALLHLGSAILYCTDVYNNEPHIDSRIVSKATLCTPHIAGHSLEAKFAAVAIVSRKLHQMLGLPYPQFATPEKPYRLNENSDWRELALSIYNPIHETLELKHAGNLSSAFLTLRKNHHHRHDFTTYFDSDSIKKYPLLG.

Substrate-binding residues include Ser-45 and Thr-66. NAD(+) is bound by residues 124–125 (QV), Asp-144, 203–205 (ASR), and Asp-226. Residue Arg-205 is part of the active site. Glu-231 is a catalytic residue. His-248 (proton donor) is an active-site residue. Residue Gly-251 participates in NAD(+) binding.

The protein belongs to the D-isomer specific 2-hydroxyacid dehydrogenase family. PdxB subfamily. In terms of assembly, homodimer.

The protein localises to the cytoplasm. It catalyses the reaction 4-phospho-D-erythronate + NAD(+) = (R)-3-hydroxy-2-oxo-4-phosphooxybutanoate + NADH + H(+). It functions in the pathway cofactor biosynthesis; pyridoxine 5'-phosphate biosynthesis; pyridoxine 5'-phosphate from D-erythrose 4-phosphate: step 2/5. Its function is as follows. Catalyzes the oxidation of erythronate-4-phosphate to 3-hydroxy-2-oxo-4-phosphonooxybutanoate. This Legionella pneumophila subsp. pneumophila (strain Philadelphia 1 / ATCC 33152 / DSM 7513) protein is Erythronate-4-phosphate dehydrogenase.